Consider the following 310-residue polypeptide: Porphobilinogen deaminase (310 aa).

Residue cysteine 240 is modified to S-(dipyrrolylmethanemethyl)cysteine.

The protein belongs to the HMBS family. Monomer. Dipyrromethane serves as cofactor.

It carries out the reaction 4 porphobilinogen + H2O = hydroxymethylbilane + 4 NH4(+). The protein operates within porphyrin-containing compound metabolism; protoporphyrin-IX biosynthesis; coproporphyrinogen-III from 5-aminolevulinate: step 2/4. Tetrapolymerization of the monopyrrole PBG into the hydroxymethylbilane pre-uroporphyrinogen in several discrete steps. This Desulfosudis oleivorans (strain DSM 6200 / JCM 39069 / Hxd3) (Desulfococcus oleovorans) protein is Porphobilinogen deaminase.